The following is a 503-amino-acid chain: Probable cytosol aminopeptidase (503 aa).

Lys274 and Asp279 together coordinate Mn(2+). Residue Lys286 is part of the active site. 3 residues coordinate Mn(2+): Asp297, Asp356, and Glu358. Arg360 is an active-site residue.

Belongs to the peptidase M17 family. Mn(2+) is required as a cofactor.

It is found in the cytoplasm. The enzyme catalyses Release of an N-terminal amino acid, Xaa-|-Yaa-, in which Xaa is preferably Leu, but may be other amino acids including Pro although not Arg or Lys, and Yaa may be Pro. Amino acid amides and methyl esters are also readily hydrolyzed, but rates on arylamides are exceedingly low.. The catalysed reaction is Release of an N-terminal amino acid, preferentially leucine, but not glutamic or aspartic acids.. In terms of biological role, presumably involved in the processing and regular turnover of intracellular proteins. Catalyzes the removal of unsubstituted N-terminal amino acids from various peptides. This chain is Probable cytosol aminopeptidase, found in Burkholderia mallei (strain SAVP1).